An 81-amino-acid chain; its full sequence is Sulfur carrier protein TusA (81 aa).

The active-site Cysteine persulfide intermediate is Cys19.

The protein belongs to the sulfur carrier protein TusA family.

It localises to the cytoplasm. Functionally, sulfur carrier protein which probably makes part of a sulfur-relay system. This is Sulfur carrier protein TusA from Shewanella denitrificans (strain OS217 / ATCC BAA-1090 / DSM 15013).